The chain runs to 200 residues: Proteasome subunit beta 2 (200 aa).

A propeptide (removed in mature form; by autocatalysis) is located at residue Met-1. Thr-2 serves as the catalytic Nucleophile.

The protein belongs to the peptidase T1B family. In terms of assembly, the 20S proteasome core is composed of 14 alpha and 14 beta subunits that assemble into four stacked heptameric rings, resulting in a barrel-shaped structure. The two inner rings, each composed of seven catalytic beta subunits, are sandwiched by two outer rings, each composed of seven alpha subunits. The catalytic chamber with the active sites is on the inside of the barrel. Has a gated structure, the ends of the cylinder being occluded by the N-termini of the alpha-subunits. Is capped at one or both ends by the proteasome regulatory ATPase, PAN.

The protein localises to the cytoplasm. It catalyses the reaction Cleavage of peptide bonds with very broad specificity.. With respect to regulation, the formation of the proteasomal ATPase PAN-20S proteasome complex, via the docking of the C-termini of PAN into the intersubunit pockets in the alpha-rings, triggers opening of the gate for substrate entry. Interconversion between the open-gate and close-gate conformations leads to a dynamic regulation of the 20S proteasome proteolysis activity. Functionally, component of the proteasome core, a large protease complex with broad specificity involved in protein degradation. The polypeptide is Proteasome subunit beta 2 (Pyrobaculum islandicum (strain DSM 4184 / JCM 9189 / GEO3)).